The following is a 412-amino-acid chain: Double C2-like domain-containing protein beta (412 aa).

Positions 1–36 (MTLRRRGEKATISIQEHMAIDVCPGPIRPIKQISDY) are negatively regulates targeting to plasma membrane. The tract at residues 1–90 (MTLRRRGEKA…EDVDQLFGAY (90 aa)) is mediates interaction with DYNLT1. The tract at residues 38–123 (PRFPRGLPPD…PDADGYESDD (86 aa)) is disordered. Positions 49–70 (GPRAAAPPDAPARPAVAGAGRR) are enriched in low complexity. Pro residues predominate over residues 95 to 108 (GPSPGPSPARPPAK). Residues 112 to 123 (DEPDADGYESDD) are compositionally biased toward acidic residues. 2 C2 domains span residues 126–250 (ALGT…SICL) and 266–399 (ERGR…ERWH). Residues Asp157, Asp163, Asp218, Asp220, Asp297, Asp303, Asp357, Asp359, and Asp365 each coordinate Ca(2+). Positions 257 to 375 (DKTEDKSLEE…FIGGVVLGIH (119 aa)) are mediates interaction with STXBP3. Ser411 is subject to Phosphoserine.

In terms of assembly, interacts with the SNARE (soluble N-ethylmaleimide-sensitive factor attached protein receptor) complex composed of SNAP25, STX1A and VAMP2; the interaction is calcium-dependent and competitive with SYT1. Interacts with STX4; the interaction is calcium-dependent, increased by insulin and glucose, and mediates vesicle fusion with plasma membrane in pancreatic cells and adipocytes. Interacts with STXBP3; the interaction is direct, occurs at the cell membrane and regulates glucose-stimulated insulin secretion. May interact with UNC13A; the interaction mediates targeting to the plasma membrane. Interacts with cytoplasmic dynein light chain DYNLT1. Requires Ca(2+) as cofactor. In terms of tissue distribution, widely expressed with highest levels in brain and kidney. Expressed in pancreatic islet cells (at protein level).

It localises to the cytoplasm. The protein localises to the cytoplasmic granule. The protein resides in the cell membrane. Its function is as follows. Calcium sensor which positively regulates SNARE-dependent fusion of vesicles with membranes. Binds phospholipids in a calcium-dependent manner and may act at the priming stage of fusion by modifying membrane curvature to stimulate fusion. Involved in calcium-triggered exocytosis in chromaffin cells and calcium-dependent spontaneous release of neurotransmitter in absence of action potentials in neuronal cells. Involved both in glucose-stimulated insulin secretion in pancreatic cells and insulin-dependent GLUT4 transport to the plasma membrane in adipocytes. In Homo sapiens (Human), this protein is Double C2-like domain-containing protein beta.